The primary structure comprises 290 residues: Cilia- and flagella-associated protein 298 (290 aa).

Belongs to the CFAP298 family. Interacts with ZMYND10. As to expression, expressed in the trachea (at protein level).

Its subcellular location is the cytoplasm. It localises to the cytoskeleton. The protein resides in the cilium basal body. Its function is as follows. Plays a role in motile cilium function, possibly by acting on outer dynein arm assembly. Seems to be important for initiation rather than maintenance of cilium motility. Required for correct positioning of cilia at the apical cell surface, suggesting an additional role in the planar cell polarity (PCP) pathway. May suppress canonical Wnt signaling activity. This chain is Cilia- and flagella-associated protein 298, found in Rattus norvegicus (Rat).